The primary structure comprises 457 residues: Probable ECA polymerase (457 aa).

11 helical membrane-spanning segments follow: residues 3 to 23 (LLQF…ILTL), 41 to 61 (MLFL…VFGF), 65 to 85 (VVPA…YAIY), 118 to 138 (IMAL…GFLL), 154 to 174 (GVAL…VYFL), 181 to 201 (WLLF…IVGG), 206 to 226 (IIIA…ITLW), 227 to 247 (MLAL…LKRY), 340 to 360 (LVVM…GLII), 377 to 397 (YKAA…IVLA), and 408 to 428 (VVFF…LYWL).

This sequence belongs to the WzyE family. As to quaternary structure, probably part of a complex composed of WzxE, WzyE and WzzE.

The protein localises to the cell inner membrane. The protein operates within bacterial outer membrane biogenesis; enterobacterial common antigen biosynthesis. Its function is as follows. Probably involved in the polymerization of enterobacterial common antigen (ECA) trisaccharide repeat units. The protein is Probable ECA polymerase of Erwinia tasmaniensis (strain DSM 17950 / CFBP 7177 / CIP 109463 / NCPPB 4357 / Et1/99).